A 901-amino-acid polypeptide reads, in one-letter code: HTH-type transcriptional regulator MalT (901 aa).

39–46 provides a ligand contact to ATP; sequence SPAGYGKT. In terms of domain architecture, HTH luxR-type spans 829 to 894; that stretch reads ELIRTSPLTQ…AAVQHAQKLL (66 aa). A DNA-binding region (H-T-H motif) is located at residues 853 to 872; the sequence is NEQIAGELEVAATTIKTHIR.

This sequence belongs to the MalT family. As to quaternary structure, monomer in solution. Oligomerizes to an active state in the presence of the positive effectors ATP and maltotriose.

Activated by ATP and maltotriose, which are both required for DNA binding. In terms of biological role, positively regulates the transcription of the maltose regulon whose gene products are responsible for uptake and catabolism of malto-oligosaccharides. Specifically binds to the promoter region of its target genes, recognizing a short DNA motif called the MalT box. In Escherichia coli O6:K15:H31 (strain 536 / UPEC), this protein is HTH-type transcriptional regulator MalT.